The following is a 436-amino-acid chain: Bystin (436 aa).

The segment at 1–105 (MPKLKVTRGA…GSDEEDEEWP (105 aa)) is disordered. Ser-54 is subject to Phosphoserine. Residues 70 to 86 (TEHATGDRPAKPRERAT) show a composition bias toward basic and acidic residues. The segment covering 96 to 105 (GSDEEDEEWP) has biased composition (acidic residues). At Ser-97 the chain carries Phosphoserine. Thr-155 carries the post-translational modification Phosphothreonine. Ser-166 and Ser-413 each carry phosphoserine.

The protein belongs to the bystin family. In terms of assembly, binds trophinin, tastin and cytokeratins.

Its subcellular location is the cytoplasm. The protein localises to the nucleus. It localises to the nucleolus. Required for processing of 20S pre-rRNA precursor and biogenesis of 40S ribosomal subunits. The polypeptide is Bystin (Rattus norvegicus (Rat)).